The chain runs to 490 residues: Betaine aldehyde dehydrogenase (490 aa).

2 residues coordinate K(+): Ile27 and Asp93. Residue 150-152 participates in NAD(+) binding; the sequence is GAW. Catalysis depends on Lys162, which acts as the Charge relay system. An NAD(+)-binding site is contributed by 176 to 179; it reads KPSE. Val180 is a K(+) binding site. 230-233 lines the NAD(+) pocket; it reads GTTT. Leu246 is a binding site for K(+). The Proton acceptor role is filled by Glu252. NAD(+)-binding residues include Gly254, Cys286, and Glu387. Cys286 acts as the Nucleophile in catalysis. The residue at position 286 (Cys286) is a Cysteine sulfenic acid (-SOH). Residues Lys457 and Gly460 each coordinate K(+). Glu464 functions as the Charge relay system in the catalytic mechanism.

This sequence belongs to the aldehyde dehydrogenase family. Dimer of dimers. K(+) serves as cofactor.

The catalysed reaction is betaine aldehyde + NAD(+) + H2O = glycine betaine + NADH + 2 H(+). Its pathway is amine and polyamine biosynthesis; betaine biosynthesis via choline pathway; betaine from betaine aldehyde: step 1/1. Functionally, involved in the biosynthesis of the osmoprotectant glycine betaine. Catalyzes the irreversible oxidation of betaine aldehyde to the corresponding acid. The chain is Betaine aldehyde dehydrogenase from Pseudomonas entomophila (strain L48).